A 457-amino-acid chain; its full sequence is Putative methyltransferase MT1451 (457 aa).

S-adenosyl-L-methionine contacts are provided by residues 276-282, E301, D325, and D341; that span reads CAGPGGK. Catalysis depends on C394, which acts as the Nucleophile.

This sequence belongs to the class I-like SAM-binding methyltransferase superfamily. RsmB/NOP family.

Its function is as follows. May act as RNA methyltransferase. This chain is Putative methyltransferase MT1451, found in Mycobacterium tuberculosis (strain CDC 1551 / Oshkosh).